A 475-amino-acid chain; its full sequence is ATP synthase subunit beta, chloroplastic (475 aa).

ATP is bound at residue 155–162 (GGAGVGKT).

The protein belongs to the ATPase alpha/beta chains family. In terms of assembly, F-type ATPases have 2 components, CF(1) - the catalytic core - and CF(0) - the membrane proton channel. CF(1) has five subunits: alpha(3), beta(3), gamma(1), delta(1), epsilon(1). CF(0) has four main subunits: a(1), b(1), b'(1) and c(9-12).

It localises to the plastid. Its subcellular location is the chloroplast thylakoid membrane. The catalysed reaction is ATP + H2O + 4 H(+)(in) = ADP + phosphate + 5 H(+)(out). Functionally, produces ATP from ADP in the presence of a proton gradient across the membrane. The catalytic sites are hosted primarily by the beta subunits. This Guillardia theta (Cryptophyte) protein is ATP synthase subunit beta, chloroplastic.